The chain runs to 179 residues: Large ribosomal subunit protein uL5 (179 aa).

Belongs to the universal ribosomal protein uL5 family. In terms of assembly, part of the 50S ribosomal subunit; part of the 5S rRNA/L5/L18/L25 subcomplex. Contacts the 5S rRNA and the P site tRNA. Forms a bridge to the 30S subunit in the 70S ribosome.

In terms of biological role, this is one of the proteins that bind and probably mediate the attachment of the 5S RNA into the large ribosomal subunit, where it forms part of the central protuberance. In the 70S ribosome it contacts protein S13 of the 30S subunit (bridge B1b), connecting the 2 subunits; this bridge is implicated in subunit movement. Contacts the P site tRNA; the 5S rRNA and some of its associated proteins might help stabilize positioning of ribosome-bound tRNAs. This Rickettsia rickettsii (strain Iowa) protein is Large ribosomal subunit protein uL5.